The chain runs to 264 residues: Thiazole synthase (264 aa).

Lysine 106 functions as the Schiff-base intermediate with DXP in the catalytic mechanism. 1-deoxy-D-xylulose 5-phosphate is bound by residues glycine 167, alanine 193 to glycine 194, and asparagine 215 to threonine 216.

Belongs to the ThiG family. As to quaternary structure, homotetramer. Forms heterodimers with either ThiH or ThiS.

Its subcellular location is the cytoplasm. It catalyses the reaction [ThiS sulfur-carrier protein]-C-terminal-Gly-aminoethanethioate + 2-iminoacetate + 1-deoxy-D-xylulose 5-phosphate = [ThiS sulfur-carrier protein]-C-terminal Gly-Gly + 2-[(2R,5Z)-2-carboxy-4-methylthiazol-5(2H)-ylidene]ethyl phosphate + 2 H2O + H(+). Its pathway is cofactor biosynthesis; thiamine diphosphate biosynthesis. Catalyzes the rearrangement of 1-deoxy-D-xylulose 5-phosphate (DXP) to produce the thiazole phosphate moiety of thiamine. Sulfur is provided by the thiocarboxylate moiety of the carrier protein ThiS. In vitro, sulfur can be provided by H(2)S. The protein is Thiazole synthase of Thioalkalivibrio sulfidiphilus (strain HL-EbGR7).